We begin with the raw amino-acid sequence, 558 residues long: Arginine--tRNA ligase (558 aa).

The 'HIGH' region signature appears at 119-129; sequence ANPDGPLHVGH.

This sequence belongs to the class-I aminoacyl-tRNA synthetase family.

It localises to the cytoplasm. It carries out the reaction tRNA(Arg) + L-arginine + ATP = L-arginyl-tRNA(Arg) + AMP + diphosphate. In Methanothrix thermoacetophila (strain DSM 6194 / JCM 14653 / NBRC 101360 / PT) (Methanosaeta thermophila), this protein is Arginine--tRNA ligase.